Here is a 223-residue protein sequence, read N- to C-terminus: MIF4G domain-containing protein A (223 aa).

Residues 7 to 206 (QEDYKMQAFD…LEMIEYRAAG (200 aa)) form the MIF4G domain.

This sequence belongs to the MIF4GD family. As to quaternary structure, interacts with eif4g1, eif4g2 and slbp; probably tethered by SLBP to the 3'-end of mRNAs ending with the histone stem-loop, it also interacts with eif4g1 which is bound to their 5'-end.

Its subcellular location is the cytoplasm. It localises to the nucleus. In terms of biological role, functions in replication-dependent translation of histone mRNAs which differ from other eukaryotic mRNAs in that they do not end with a poly-A tail but a stem-loop. May participate in circularizing those mRNAs specifically enhancing their translation. The protein is MIF4G domain-containing protein A (mif4gd-a) of Xenopus laevis (African clawed frog).